The sequence spans 381 residues: Cyclin-dependent kinase inhibitor CIP1 (381 aa).

Over residues 1-11 (MLLERLHKRLH) the composition is skewed to basic residues. The segment at 1 to 30 (MLLERLHKRLHAGSSRRSQENKDKNCKPED) is disordered. Positions 17 to 30 (RSQENKDKNCKPED) are enriched in basic and acidic residues. Phosphothreonine is present on residues T65, T69, and T73.

In terms of assembly, interact with the CDC28/CLN2 complex. Post-translationally, phosphorylated during S phase in a CDC28-dependent manner. Phosphorylated at Thr-65 and Thr-73 by HOG1 under osmotic stress. The phosphorylations of Thr-65 and Thr-73 are necessary for CIP1-induced growth inhibition.

It localises to the cytoplasm. The protein resides in the nucleus. Acts as an inhibitor of the CDC28/CLN2 cyclin-dependent kinase complex. Stabilizes the CDC28 inhibitor SIC1. Negatively regulates the G1/S phase transition. Contributes to osmostress-induced transitory G1 delay. The protein is Cyclin-dependent kinase inhibitor CIP1 of Saccharomyces cerevisiae (strain ATCC 204508 / S288c) (Baker's yeast).